The chain runs to 128 residues: uncharacterized protein (128 aa).

One can recognise an S1 motif domain in the interval 6–74 (GSKLQGKITG…KDGKIGLSIK (69 aa)). Residues 72–128 (SIKKAKDRPQARPRNDFRPKESFEQKMNKFLKDSEDRLSSLKRNTESKRGGRGARRG) are disordered. The segment covering 78–120 (DRPQARPRNDFRPKESFEQKMNKFLKDSEDRLSSLKRNTESKR) has biased composition (basic and acidic residues).

The protein belongs to the peptidase U57 family.

This is an uncharacterized protein from Bacillus subtilis (strain 168).